The chain runs to 761 residues: MGSFLRSFRHNGGSTAPSVGAVPAKKEPQPPPMTPLEKRLLDMGPIREDGSDKFYGMENYGNTCYCNSILQCLYYSVPFREAVINYPTRTPIESLEAALAKSLRYPNPNAQLEAEAQAEKQKAANAQRPGMPPNPQQKPEDKDSPEYKKKMALQTLPLLETQNNAASYGMSESLFTSLKDIFESVVGSQSRIGIIRPQQFLEVLRRDHEMFRTAMHQDAHEFLNLLLNEVVANVEAEASKQPLMEKSLPAPETADSVDQSSSTGSKTPNTTRWVHELFEGLLTSETQCLTCEKVSQRDEVFLDLSVDLEQHSSVTSCLRKFSAEEMLCERNKFHCDNCGGLQEAEKRMKIKRLPRILALHLKRFKYTEDLQRLQKLFHRVVYPYHLRLFNTTDDAEDPDRLYELYAVVVHIGGGPYHGHYVAIIKTEDRGWLLFDDEMVEPVDKNYVKNFFGDKPGLACAYVLFYQETTLEAVLKEQEQENMDSNLAATDANDTILKQNGFPQSPLAHVHSASQIPSHEDNLRPNGLRRAPTAPQLSTHHEHGDPESTPFSPLSPLSPVPPVPPIPERVATVATPPKNDALAKREEKERKAAEKEKEKAEKLRRKEQGARMKENQRREEAELKAALEMSKASKAEEDRRLSTENGKEKQGGGLSRLKRGSKSLSHRLGKDKETRSVSSDLPPVPIPEHSTLSQSGPTSEQQQQQRQQSPPNHDQPPNSPQPGKPTIREDEQVNHKDSKHERTGHGKWRSFSLRKKSFSILS.

Residues 1-45 form a disordered region; it reads MGSFLRSFRHNGGSTAPSVGAVPAKKEPQPPPMTPLEKRLLDMGP. A compositionally biased stretch (basic and acidic residues) spans 36–45; the sequence is LEKRLLDMGP. A USP domain is found at 55–468; the sequence is YGMENYGNTC…CAYVLFYQET (414 aa). Residue C64 is the Nucleophile of the active site. 2 disordered regions span residues 113–146 and 242–269; these read EAEA…DSPE and PLME…KTPN. A compositionally biased stretch (polar residues) spans 256–269; it reads SVDQSSSTGSKTPN. Residue H419 is the Proton acceptor of the active site. Residues 496 to 761 form a disordered region; the sequence is LKQNGFPQSP…LRKKSFSILS (266 aa). Residues 555–566 are compositionally biased toward pro residues; that stretch reads PLSPVPPVPPIP. Residues 577-640 are a coiled coil; it reads KNDALAKREE…ASKAEEDRRL (64 aa). Basic and acidic residues predominate over residues 580 to 649; that stretch reads ALAKREEKER…LSTENGKEKQ (70 aa). Positions 655–666 are enriched in basic residues; sequence RLKRGSKSLSHR. Low complexity predominate over residues 692-710; it reads SQSGPTSEQQQQQRQQSPP. A compositionally biased stretch (pro residues) spans 712 to 722; that stretch reads HDQPPNSPQPG. A compositionally biased stretch (basic and acidic residues) spans 725–743; it reads TIREDEQVNHKDSKHERTG. The span at 744 to 761 shows a compositional bias: basic residues; that stretch reads HGKWRSFSLRKKSFSILS.

It belongs to the peptidase C19 family. Interacts with creA, creC and qutD.

It catalyses the reaction Thiol-dependent hydrolysis of ester, thioester, amide, peptide and isopeptide bonds formed by the C-terminal Gly of ubiquitin (a 76-residue protein attached to proteins as an intracellular targeting signal).. Its function is as follows. Ubiquitin thioesterase component of the regulatory network controlling carbon source utilization through ubiquitination and deubiquitination involving creA, creB, creC, creD and acrB. Deubiquitinates the creA catabolic repressor and the quinate permease qutD. Also plays a role in response to carbon starvation and the control of extracellular proteases activity. This Neosartorya fischeri (strain ATCC 1020 / DSM 3700 / CBS 544.65 / FGSC A1164 / JCM 1740 / NRRL 181 / WB 181) (Aspergillus fischerianus) protein is Probable ubiquitin carboxyl-terminal hydrolase creB (creB).